The sequence spans 208 residues: Ribosomal RNA large subunit methyltransferase E (208 aa).

The S-adenosyl-L-methionine site is built by glycine 63, tryptophan 65, aspartate 83, aspartate 99, and aspartate 124. Residue lysine 164 is the Proton acceptor of the active site.

Belongs to the class I-like SAM-binding methyltransferase superfamily. RNA methyltransferase RlmE family.

The protein resides in the cytoplasm. It catalyses the reaction uridine(2552) in 23S rRNA + S-adenosyl-L-methionine = 2'-O-methyluridine(2552) in 23S rRNA + S-adenosyl-L-homocysteine + H(+). Specifically methylates the uridine in position 2552 of 23S rRNA at the 2'-O position of the ribose in the fully assembled 50S ribosomal subunit. This Salmonella arizonae (strain ATCC BAA-731 / CDC346-86 / RSK2980) protein is Ribosomal RNA large subunit methyltransferase E.